The sequence spans 158 residues: NAD(P)H-quinone oxidoreductase subunit N (158 aa).

This sequence belongs to the complex I NdhN subunit family. NDH-1 can be composed of about 15 different subunits; different subcomplexes with different compositions have been identified which probably have different functions.

It is found in the cellular thylakoid membrane. It catalyses the reaction a plastoquinone + NADH + (n+1) H(+)(in) = a plastoquinol + NAD(+) + n H(+)(out). It carries out the reaction a plastoquinone + NADPH + (n+1) H(+)(in) = a plastoquinol + NADP(+) + n H(+)(out). In terms of biological role, NDH-1 shuttles electrons from an unknown electron donor, via FMN and iron-sulfur (Fe-S) centers, to quinones in the respiratory and/or the photosynthetic chain. The immediate electron acceptor for the enzyme in this species is believed to be plastoquinone. Couples the redox reaction to proton translocation, and thus conserves the redox energy in a proton gradient. Cyanobacterial NDH-1 also plays a role in inorganic carbon-concentration. The polypeptide is NAD(P)H-quinone oxidoreductase subunit N (Prochlorococcus marinus (strain MIT 9312)).